We begin with the raw amino-acid sequence, 424 residues long: O-methyltransferase aunD (424 aa).

D275 is a binding site for S-adenosyl-L-methionine. Residue H326 is the Proton acceptor of the active site.

Belongs to the class I-like SAM-binding methyltransferase superfamily. Cation-independent O-methyltransferase family.

The protein operates within secondary metabolite biosynthesis. Its function is as follows. O-methyltransferase; part of the gene cluster that mediates the biosynthesis of aurasperone B, a dimeric gamma-naphthopyrone. The first step in the biosynthesis of aurasperone B is the production of gamma-naphthopyrone precursor YWA1 by the non-reducing polyketide synthase albA, via condensation of one acetyl-CoA starter unit with 6 malonyl-CoA units. YWA1 is then methylated by aunE at position C-6 to yield foncesin which is further methylated at position C-8 by aunD to produce fonsecin B. A key enzyme in the biosynthetic pathway is the cytochrome P450 monooxygenase aunB which catalyzes the oxidative dimerization of fonsecin B to aurasperone B. AunB also catalyzes the oxidative dimerization of rubrofusarin B into aurasperone A. The sequence is that of O-methyltransferase aunD from Aspergillus niger (strain ATCC 1015 / CBS 113.46 / FGSC A1144 / LSHB Ac4 / NCTC 3858a / NRRL 328 / USDA 3528.7).